The following is a 462-amino-acid chain: Argininosuccinate lyase (462 aa).

The protein belongs to the lyase 1 family. Argininosuccinate lyase subfamily.

Its subcellular location is the cytoplasm. The enzyme catalyses 2-(N(omega)-L-arginino)succinate = fumarate + L-arginine. Its pathway is amino-acid biosynthesis; L-arginine biosynthesis; L-arginine from L-ornithine and carbamoyl phosphate: step 3/3. The sequence is that of Argininosuccinate lyase from Streptococcus agalactiae serotype Ia (strain ATCC 27591 / A909 / CDC SS700).